A 1960-amino-acid polypeptide reads, in one-letter code: Intraflagellar transport protein 172 (1960 aa).

WD repeat units lie at residues Ser-63–Lys-103 and Gly-328–Cys-367. 3 TPR repeats span residues Lys-1064–Arg-1098, Cys-1362–Val-1395, and Met-1397–Arg-1428.

This sequence belongs to the IFT172 family.

It is found in the cell projection. The protein localises to the cilium. Its subcellular location is the flagellum. The protein resides in the cytoplasm. It localises to the cytoskeleton. It is found in the flagellum axoneme. The protein localises to the flagellum basal body. Functionally, component of the intraflagellar transport complex B (IFT-B) involved in flagellar assembly. This is Intraflagellar transport protein 172 from Giardia intestinalis (strain ATCC 50803 / WB clone C6) (Giardia lamblia).